Consider the following 149-residue polypeptide: Lipoprotein signal peptidase (149 aa).

The next 3 membrane-spanning stretches (helical) occupy residues 24-44, 57-77, and 81-101; these read SHIALGASTSIVTGLLSLTNL, KMWFFYLISVIALIVMGYLLW, and GKWLYEVGISLMIAGTLGNFI. Residues Asp111 and Asp127 contribute to the active site. A helical transmembrane segment spans residues 122 to 142; the sequence is IFNFADSCLTVGVIFILIGVL.

This sequence belongs to the peptidase A8 family.

The protein localises to the cell membrane. The catalysed reaction is Release of signal peptides from bacterial membrane prolipoproteins. Hydrolyzes -Xaa-Yaa-Zaa-|-(S,diacylglyceryl)Cys-, in which Xaa is hydrophobic (preferably Leu), and Yaa (Ala or Ser) and Zaa (Gly or Ala) have small, neutral side chains.. It functions in the pathway protein modification; lipoprotein biosynthesis (signal peptide cleavage). This protein specifically catalyzes the removal of signal peptides from prolipoproteins. The protein is Lipoprotein signal peptidase of Lactiplantibacillus plantarum (strain ATCC BAA-793 / NCIMB 8826 / WCFS1) (Lactobacillus plantarum).